Here is a 166-residue protein sequence, read N- to C-terminus: Nascent polypeptide-associated complex subunit beta (166 aa).

Disordered regions lie at residues 1 to 40 and 129 to 166; these read MVLNQEKLAKLQAASRTGGKGTPRRKMAPKPKGPGGEDPK and HAASQAAAAGTKDDDDVPDVVENFDEADKKETEVDKLD. The NAC-A/B domain occupies 35–100; sequence GGEDPKLQAA…GVDKELTELV (66 aa). The segment covering 141-153 has biased composition (acidic residues); sequence DDDDVPDVVENFD. The span at 154 to 166 shows a compositional bias: basic and acidic residues; the sequence is EADKKETEVDKLD.

The protein belongs to the NAC-beta family. As to quaternary structure, part of the nascent polypeptide-associated complex (NAC), consisting of EGD2 and EGD1. NAC associates with ribosomes via EGD1.

The protein resides in the cytoplasm. It localises to the nucleus. Component of the nascent polypeptide-associated complex (NAC), a dynamic component of the ribosomal exit tunnel, protecting the emerging polypeptides from interaction with other cytoplasmic proteins to ensure appropriate nascent protein targeting. The NAC complex also promotes mitochondrial protein import by enhancing productive ribosome interactions with the outer mitochondrial membrane and blocks the inappropriate interaction of ribosomes translating non-secretory nascent polypeptides with translocation sites in the membrane of the endoplasmic reticulum. EGD1 may act as a transcription factor that exert a negative effect on the expression of several genes that are transcribed by RNA polymerase II. This chain is Nascent polypeptide-associated complex subunit beta (EGD1), found in Mycosarcoma maydis (Corn smut fungus).